Here is a 375-residue protein sequence, read N- to C-terminus: 4-hydroxy-3-methylbut-2-en-1-yl diphosphate synthase (flavodoxin) (375 aa).

[4Fe-4S] cluster contacts are provided by Cys270, Cys273, Cys305, and Glu312.

The protein belongs to the IspG family. The cofactor is [4Fe-4S] cluster.

It catalyses the reaction (2E)-4-hydroxy-3-methylbut-2-enyl diphosphate + oxidized [flavodoxin] + H2O + 2 H(+) = 2-C-methyl-D-erythritol 2,4-cyclic diphosphate + reduced [flavodoxin]. It participates in isoprenoid biosynthesis; isopentenyl diphosphate biosynthesis via DXP pathway; isopentenyl diphosphate from 1-deoxy-D-xylulose 5-phosphate: step 5/6. Functionally, converts 2C-methyl-D-erythritol 2,4-cyclodiphosphate (ME-2,4cPP) into 1-hydroxy-2-methyl-2-(E)-butenyl 4-diphosphate. The chain is 4-hydroxy-3-methylbut-2-en-1-yl diphosphate synthase (flavodoxin) from Yersinia pestis (strain Pestoides F).